The sequence spans 37 residues: Cytochrome b6-f complex subunit 5 (37 aa).

The helical transmembrane segment at 5–25 (LLCGIVLGLVPVTIAGLFVTA) threads the bilayer.

This sequence belongs to the PetG family. In terms of assembly, the 4 large subunits of the cytochrome b6-f complex are cytochrome b6, subunit IV (17 kDa polypeptide, PetD), cytochrome f and the Rieske protein, while the 4 small subunits are PetG, PetL, PetM and PetN. The complex functions as a dimer.

It is found in the plastid. It localises to the chloroplast thylakoid membrane. In terms of biological role, component of the cytochrome b6-f complex, which mediates electron transfer between photosystem II (PSII) and photosystem I (PSI), cyclic electron flow around PSI, and state transitions. PetG is required for either the stability or assembly of the cytochrome b6-f complex. This Chlamydomonas reinhardtii (Chlamydomonas smithii) protein is Cytochrome b6-f complex subunit 5.